The following is a 545-amino-acid chain: Sterol O-acyltransferase 1 (545 aa).

Position 1 is an N-acetylmethionine (Met1). The tract at residues 1–24 is disordered; that stretch reads MVGEETSLRNRLSRSAENPEQDEA. Over 1-133 the chain is Cytoplasmic; it reads MVGEETSLRN…LDELFEVDHI (133 aa). Phosphoserine is present on Ser7. Positions 9 to 18 are enriched in polar residues; the sequence is RNRLSRSAEN. Residue His132 coordinates cholesterol. Residues 134 to 155 traverse the membrane as a helical segment; sequence RTIYHMFIALLIIFILSTLVVD. Residues 156–175 are Lumenal-facing; that stretch reads YIDEGRLVLEFSLLAYAFGQ. A helical membrane pass occupies residues 176 to 201; it reads FPIVIWTWWAMFLSTLAIPYFLFQRW. The Cytoplasmic segment spans residues 202–213; it reads AHGYSKSSHPLI. Residues 214-239 traverse the membrane as a helical segment; it reads YSLIHGAFFLVFQLGILGFIPTYVVL. The Lumenal portion of the chain corresponds to 240 to 247; that stretch reads AYTLPPAS. A helical transmembrane segment spans residues 248–271; that stretch reads RFILILEQIRLVMKAHSYVRENVP. Over 272–314 the chain is Cytoplasmic; the sequence is RVLSAAKEKSSTVPVPTVNQYLYFLFAPTLIYRDSYPRTPTVR. A helical membrane pass occupies residues 315 to 347; it reads WGYVAMQFLQVFGCLFYVYYIFERLCAPLFRNI. Residues 348–364 lie on the Lumenal side of the membrane; that stretch reads KQEPFSARVLVLCVFNS. Residues 365–390 form a helical membrane-spanning segment; it reads ILPGVLMLFLSFFAFLHCWLNAFAEM. Residues 391 to 438 are Cytoplasmic-facing; the sequence is LRFGDRMFYKDWWNSTSYSNYYRTWNVVVHDWLYYYVYKDLLWFFSKR. Positions 398 to 404 match the FYXDWWN motif motif; sequence FYKDWWN. An acyl-CoA is bound by residues Asn410, Arg413, Asn416, His420, Tyr428, and Ser451. The helical transmembrane segment at 439–463 threads the bilayer; the sequence is FRPAAMLAVFALSAVVHEYALAVCL. Residue His455 is part of the active site. At 464–469 the chain is on the lumenal side; that stretch reads SYFYPV. The helical transmembrane segment at 470-485 threads the bilayer; the sequence is LFVLFMFFGMAFNFIV. Residues 486–491 are Cytoplasmic-facing; sequence NDSRKR. A helical membrane pass occupies residues 492 to 523; that stretch reads PVWNIMVRASLFLGHGVILCFYSQEWYARQRC. Residues Cys523 and Cys541 are joined by a disulfide bond. The Lumenal segment spans residues 524–545; the sequence is PLKNPTFLDYVRPRTWTCRYVF.

It belongs to the membrane-bound acyltransferase family. Sterol o-acyltransferase subfamily. As to quaternary structure, may form homo- or heterodimers. Interacts with UBIAD1.

It localises to the endoplasmic reticulum membrane. The catalysed reaction is a sterol + a long-chain fatty acyl-CoA = a long-chain 3-hydroxysterol ester + CoA. It carries out the reaction cholesterol + an acyl-CoA = a cholesterol ester + CoA. It catalyses the reaction cholesterol + (9Z)-octadecenoyl-CoA = cholesteryl (9Z-octadecenoate) + CoA. The enzyme catalyses cholesterol + hexadecanoyl-CoA = cholesteryl hexadecanoate + CoA. The catalysed reaction is octadecanoyl-CoA + cholesterol = cholesteryl octadecanoate + CoA. It carries out the reaction (9Z,12Z)-octadecadienoyl-CoA + cholesterol = cholesteryl (9Z,12Z)-octadecadienoate + CoA. It catalyses the reaction (5Z,8Z,11Z,14Z)-eicosatetraenoyl-CoA + cholesterol = cholesteryl (5Z,8Z,11Z,14Z)-eicosatetraenoate + CoA. The enzyme catalyses (9Z)-hexadecenoyl-CoA + cholesterol = cholesteryl (9Z)-hexadecenoate + CoA. The catalysed reaction is (11Z)-octadecenoyl-CoA + cholesterol = cholesteryl (11Z)-octadecenoate + CoA. It carries out the reaction (7Z)-octadecenoyl-CoA + cholesterol = cholesteryl (7Z)-octadecenoate + CoA. Functionally, catalyzes the formation of fatty acid-cholesterol esters, which are less soluble in membranes than cholesterol. Plays a role in lipoprotein assembly and dietary cholesterol absorption. Preferentially utilizes oleoyl-CoA ((9Z)-octadecenoyl-CoA) as substrate: shows a higher activity towards an acyl-CoA substrate with a double bond at the delta-9 position (9Z) than towards saturated acyl-CoA or an unsaturated acyl-CoA with a double bond at the delta-7 (7Z) or delta-11 (11Z) positions. The chain is Sterol O-acyltransferase 1 from Rattus norvegicus (Rat).